The sequence spans 484 residues: GTPase Obg (484 aa).

Residues 7–164 (PRFVDRVVIH…RDLTLELKTV (158 aa)) form the Obg domain. Residues 21–43 (SGGNGCASVHREKFKPLGGPDGG) are disordered. The region spanning 165–345 (ADVGLVGFPS…LIFGLSQMIS (181 aa)) is the OBG-type G domain. GTP contacts are provided by residues 171-178 (GFPSAGKS), 196-200 (FTTLV), 217-220 (DVPG), 297-300 (NKID), and 326-328 (STA). The Mg(2+) site is built by Ser178 and Thr198. The OCT domain maps to 363–441 (PIPVDDSGFT…IGEMTFDWEP (79 aa)). The disordered stretch occupies residues 439–484 (WEPQTPAGEPVAMSGRGTDPRLDSNKRVGAAERKAARSRRREHGDG). Residues 456 to 473 (TDPRLDSNKRVGAAERKA) show a composition bias toward basic and acidic residues. The span at 474–484 (ARSRRREHGDG) shows a compositional bias: basic residues.

It belongs to the TRAFAC class OBG-HflX-like GTPase superfamily. OBG GTPase family. Monomer. Mg(2+) is required as a cofactor.

It localises to the cytoplasm. Functionally, an essential GTPase which binds GTP, GDP and possibly (p)ppGpp with moderate affinity, with high nucleotide exchange rates and a fairly low GTP hydrolysis rate. Plays a role in control of the cell cycle, stress response, ribosome biogenesis and in those bacteria that undergo differentiation, in morphogenesis control. The protein is GTPase Obg of Mycobacterium tuberculosis (strain CDC 1551 / Oshkosh).